Consider the following 241-residue polypeptide: Glucosamine-6-phosphate deaminase (241 aa).

Asp-67 functions as the Proton acceptor; for enolization step in the catalytic mechanism. Catalysis depends on Asn-136, which acts as the For ring-opening step. Catalysis depends on His-138, which acts as the Proton acceptor; for ring-opening step. The active-site For ring-opening step is Glu-143.

Belongs to the glucosamine/galactosamine-6-phosphate isomerase family. NagB subfamily.

The enzyme catalyses alpha-D-glucosamine 6-phosphate + H2O = beta-D-fructose 6-phosphate + NH4(+). It functions in the pathway amino-sugar metabolism; N-acetylneuraminate degradation; D-fructose 6-phosphate from N-acetylneuraminate: step 5/5. In terms of biological role, catalyzes the reversible isomerization-deamination of glucosamine 6-phosphate (GlcN6P) to form fructose 6-phosphate (Fru6P) and ammonium ion. The chain is Glucosamine-6-phosphate deaminase from Clostridium acetobutylicum (strain ATCC 824 / DSM 792 / JCM 1419 / IAM 19013 / LMG 5710 / NBRC 13948 / NRRL B-527 / VKM B-1787 / 2291 / W).